We begin with the raw amino-acid sequence, 102 residues long: Phosphoribosyl-ATP pyrophosphatase (102 aa).

This sequence belongs to the PRA-PH family.

It localises to the cytoplasm. It catalyses the reaction 1-(5-phospho-beta-D-ribosyl)-ATP + H2O = 1-(5-phospho-beta-D-ribosyl)-5'-AMP + diphosphate + H(+). Its pathway is amino-acid biosynthesis; L-histidine biosynthesis; L-histidine from 5-phospho-alpha-D-ribose 1-diphosphate: step 2/9. This is Phosphoribosyl-ATP pyrophosphatase from Dinoroseobacter shibae (strain DSM 16493 / NCIMB 14021 / DFL 12).